Consider the following 517-residue polypeptide: Ribonuclease Y (517 aa).

Residues 1–21 form a helical membrane-spanning segment; that stretch reads MIESLIALIAAIVGLGIGYLV. The region spanning 207–273 is the KH domain; it reads LINVINIKND…TKVIELLVED (67 aa). The 94-residue stretch at 333 to 426 folds into the HD domain; the sequence is ALAHSLEVAH…VCAADTLSAA (94 aa).

Belongs to the RNase Y family.

It is found in the cell membrane. Functionally, endoribonuclease that initiates mRNA decay. In Campylobacter jejuni subsp. doylei (strain ATCC BAA-1458 / RM4099 / 269.97), this protein is Ribonuclease Y.